The sequence spans 98 residues: MGSSKLLVALTLVVMITISYDLFSEIGISAATLVIPTCFENCNATFQDPECNKWCALLAYKDGSCLYPPSEVDDLPPIKRPYIPRCCCNPITLSPPSP.

Residues 1-19 (MGSSKLLVALTLVVMITIS) form the signal peptide. 4 cysteine pairs are disulfide-bonded: Cys-38–Cys-88, Cys-42–Cys-65, Cys-51–Cys-86, and Cys-55–Cys-87.

Belongs to the DEFL family.

The protein localises to the secreted. The sequence is that of Defensin-like protein 68 from Arabidopsis thaliana (Mouse-ear cress).